A 243-amino-acid polypeptide reads, in one-letter code: 1-(5-phosphoribosyl)-5-[(5-phosphoribosylamino)methylideneamino] imidazole-4-carboxamide isomerase (243 aa).

Residue Asp-8 is the Proton acceptor of the active site. Asp-130 acts as the Proton donor in catalysis.

The protein belongs to the HisA/HisF family.

Its subcellular location is the cytoplasm. The catalysed reaction is 1-(5-phospho-beta-D-ribosyl)-5-[(5-phospho-beta-D-ribosylamino)methylideneamino]imidazole-4-carboxamide = 5-[(5-phospho-1-deoxy-D-ribulos-1-ylimino)methylamino]-1-(5-phospho-beta-D-ribosyl)imidazole-4-carboxamide. It participates in amino-acid biosynthesis; L-histidine biosynthesis; L-histidine from 5-phospho-alpha-D-ribose 1-diphosphate: step 4/9. The chain is 1-(5-phosphoribosyl)-5-[(5-phosphoribosylamino)methylideneamino] imidazole-4-carboxamide isomerase from Ruthia magnifica subsp. Calyptogena magnifica.